The sequence spans 273 residues: Ribosomal RNA small subunit methyltransferase A (273 aa).

S-adenosyl-L-methionine-binding residues include asparagine 18, leucine 20, glycine 45, glutamate 66, aspartate 91, and asparagine 113.

The protein belongs to the class I-like SAM-binding methyltransferase superfamily. rRNA adenine N(6)-methyltransferase family. RsmA subfamily.

The protein localises to the cytoplasm. It carries out the reaction adenosine(1518)/adenosine(1519) in 16S rRNA + 4 S-adenosyl-L-methionine = N(6)-dimethyladenosine(1518)/N(6)-dimethyladenosine(1519) in 16S rRNA + 4 S-adenosyl-L-homocysteine + 4 H(+). In terms of biological role, specifically dimethylates two adjacent adenosines (A1518 and A1519) in the loop of a conserved hairpin near the 3'-end of 16S rRNA in the 30S particle. May play a critical role in biogenesis of 30S subunits. The polypeptide is Ribosomal RNA small subunit methyltransferase A (Escherichia coli O81 (strain ED1a)).